A 226-amino-acid chain; its full sequence is RNA pyrophosphohydrolase (226 aa).

The Nudix hydrolase domain occupies 6 to 149 (GFRPNVGIIL…KRGVYEMALT (144 aa)). Residues 38–59 (GGIDRGETPEQAMFRELHEEVG) carry the Nudix box motif. The interval 197 to 226 (MELPPGASFDPDPRTGDGDPGMPGIHKPAG) is disordered.

Belongs to the Nudix hydrolase family. RppH subfamily. A divalent metal cation serves as cofactor.

In terms of biological role, accelerates the degradation of transcripts by removing pyrophosphate from the 5'-end of triphosphorylated RNA, leading to a more labile monophosphorylated state that can stimulate subsequent ribonuclease cleavage. This chain is RNA pyrophosphohydrolase, found in Paracidovorax citrulli (strain AAC00-1) (Acidovorax citrulli).